The primary structure comprises 92 residues: Phospholemman (92 aa).

An N-terminal signal peptide occupies residues 1–20; that stretch reads MAPLHHILVLCVGFLTTATA. Residues 21–35 lie on the Extracellular side of the membrane; that stretch reads EAPQEHDPFTYDYQS. A helical membrane pass occupies residues 36–56; the sequence is LRIGGLIIAGILFILGILIVL. The Cytoplasmic portion of the chain corresponds to 57 to 92; that stretch reads SRRCRCKFNQQQRTGEPDEEEGTFRSSIRRLSTRRR. Residue C60 is the site of S-palmitoyl cysteine attachment. C62 is subject to S-glutathionyl cysteine; alternate. C62 carries S-palmitoyl cysteine; alternate lipidation. Residues 65-92 are disordered; sequence NQQQRTGEPDEEEGTFRSSIRRLSTRRR. T79 is modified (phosphothreonine). Residue S82 is modified to Phosphoserine. Residues S83 and S88 each carry the phosphoserine; by PKA and PKC modification. Over residues 83 to 92 the composition is skewed to basic residues; sequence SIRRLSTRRR. T89 carries the post-translational modification Phosphothreonine; by PKC.

This sequence belongs to the FXYD family. Homotetramer. Monomer. Regulatory subunit of the sodium/potassium-transporting ATPase (NKA) which is composed of a catalytic alpha subunit, a non-catalytic beta subunit and an additional regulatory subunit. The monomeric form associates with NKA while the oligomeric form does not. Interacts with the catalytic alpha-1 subunit ATP1A1. Also interacts with the catalytic alpha-2 and alpha-3 subunits ATP1A2 and ATP1A3. Very little interaction with the alpha subunits ATP1A1, ATP1A2 or ATP1A3 when phosphorylated at Ser-83. Interacts with non-catalytic beta-1 subunit ATP1B1. Oxidative stress decreases interaction with ATP1A1 but increases interaction with ATP1B1. Post-translationally, major plasma membrane substrate for cAMP-dependent protein kinase (PKA) and protein kinase C (PKC) in several different tissues. Phosphorylated in response to insulin and adrenergic stimulation. Phosphorylation at Ser-88 stimulates sodium/potassium-transporting ATPase activity while the unphosphorylated form inhibits sodium/potassium-transporting ATPase activity. Phosphorylation increases tetramerization, decreases binding to ATP1A1 and reduces inhibition of ATP1A1 activity. Phosphorylation at Ser-83 leads to greatly reduced interaction with ATP1A1, ATP1A2 and ATP1A3. May be phosphorylated by DMPK. In terms of processing, palmitoylation increases half-life and stability and is enhanced upon phosphorylation at Ser-88 by PKA. In terms of tissue distribution, present in heart, esophagus, stomach, aorta, skeletal muscle, smooth muscle, and liver but absent from brain and kidney.

The protein localises to the cell membrane. The protein resides in the sarcolemma. It localises to the apical cell membrane. Its subcellular location is the membrane. It is found in the caveola. The protein localises to the T-tubule. Functionally, associates with and regulates the activity of the sodium/potassium-transporting ATPase (NKA) which transports Na(+) out of the cell and K(+) into the cell. Inhibits NKA activity in its unphosphorylated state and stimulates activity when phosphorylated. Reduces glutathionylation of the NKA beta-1 subunit ATP1B1, thus reversing glutathionylation-mediated inhibition of ATP1B1. Contributes to female sexual development by maintaining the excitability of neurons which secrete gonadotropin-releasing hormone. The sequence is that of Phospholemman from Canis lupus familiaris (Dog).